Reading from the N-terminus, the 563-residue chain is Arginine--tRNA ligase (563 aa).

The 'HIGH' region motif lies at Pro121–His131.

The protein belongs to the class-I aminoacyl-tRNA synthetase family. As to quaternary structure, monomer.

It localises to the cytoplasm. The enzyme catalyses tRNA(Arg) + L-arginine + ATP = L-arginyl-tRNA(Arg) + AMP + diphosphate. This is Arginine--tRNA ligase from Streptococcus pneumoniae serotype 19F (strain G54).